The primary structure comprises 714 residues: Transcription factor SFL2 (714 aa).

A DNA-binding region spans residues 15–134 (AFVHKLYTML…LVYIKRRSSS (120 aa)). Disordered stretches follow at residues 187–467 (YYQQ…VGVT), 565–658 (STSV…NNTN), and 670–714 (SHSQ…NMNK). 2 stretches are compositionally biased toward pro residues: residues 193–207 (GQVP…PPHQ) and 223–235 (QPPP…PPQP). Polar residues predominate over residues 266–275 (LDQTQPLSYT). Low complexity predominate over residues 276-285 (PQLEYQQQQY). Residues 286–296 (PQPPLPPPPPQ) are compositionally biased toward pro residues. Polar residues-rich tracts occupy residues 310–321 (DNLSRPSPNEQH) and 354–372 (SEGS…LNNE). Positions 376–389 (ESSTSSSSTTVTST) are enriched in low complexity. Composition is skewed to polar residues over residues 413–435 (SRMN…TQNG) and 444–461 (LIPS…TGTD). The segment covering 574 to 591 (GPFSTSTSTSTTSPTLSS) has biased composition (low complexity). Positions 599 to 608 (EPQNSTIANG) are enriched in polar residues. Composition is skewed to low complexity over residues 609 to 641 (TSIR…RQLS) and 648 to 658 (QQQQQPNNNTN). The span at 703 to 714 (SKSDDDTDNMNK) shows a compositional bias: basic and acidic residues.

Belongs to the HSF family.

The protein resides in the nucleus. Its function is as follows. Transcription factor that plays a role of activator of filamentous growth and which is involved in invasive growth at a high temperature. Required for human oral epithelium colonization and damage. Promotes filamentous growth in EFG1- and FLO8-dependent manners. Antagonizes functions of SFL1. The chain is Transcription factor SFL2 (SFL2) from Candida albicans (strain SC5314 / ATCC MYA-2876) (Yeast).